Reading from the N-terminus, the 298-residue chain is Probable GTP 3',8-cyclase (298 aa).

The 224-residue stretch at 4–227 (RYGREIRSFR…MQNRKKYVID (224 aa)) folds into the Radical SAM core domain. Arg-13 provides a ligand contact to GTP. [4Fe-4S] cluster is bound by residues Cys-20 and Cys-24. An S-adenosyl-L-methionine-binding site is contributed by Tyr-26. Cys-27 serves as a coordination point for [4Fe-4S] cluster. Lys-61 lines the GTP pocket. Residue Gly-65 participates in S-adenosyl-L-methionine binding. Position 91 (Thr-91) interacts with GTP. Position 115 (Ser-115) interacts with S-adenosyl-L-methionine. Lys-152 is a binding site for GTP. Cys-243 and Cys-246 together coordinate [4Fe-4S] cluster. Position 248-250 (248-250 (RIR)) interacts with GTP. Cys-260 contributes to the [4Fe-4S] cluster binding site.

Belongs to the radical SAM superfamily. MoaA family. Requires [4Fe-4S] cluster as cofactor.

It carries out the reaction GTP + AH2 + S-adenosyl-L-methionine = (8S)-3',8-cyclo-7,8-dihydroguanosine 5'-triphosphate + 5'-deoxyadenosine + L-methionine + A + H(+). Its pathway is cofactor biosynthesis; molybdopterin biosynthesis. Functionally, catalyzes the cyclization of GTP to (8S)-3',8-cyclo-7,8-dihydroguanosine 5'-triphosphate. This Methanococcus maripaludis (strain C6 / ATCC BAA-1332) protein is Probable GTP 3',8-cyclase.